Here is a 54-residue protein sequence, read N- to C-terminus: U7-myrmicitoxin-Tb1a (54 aa).

The first 26 residues, 1–26 (MQLSHLLLAFAMIFVMTIIHTPQVQA), serve as a signal peptide directing secretion. Residues 27-36 (DAMADADADA) constitute a propeptide that is removed on maturation. Cysteines 40 and 49 form a disulfide.

Expressed by the venom gland.

It localises to the secreted. Functionally, venom protein with unknown function. Does not induce paralysis when a high dose is administered by intrathoracic injection into the blowfly Lucilia caesar. This is U7-myrmicitoxin-Tb1a from Tetramorium bicarinatum (Tramp ant).